A 190-amino-acid chain; its full sequence is uncharacterized protein (190 aa).

It to E.coli YdjR.

This is an uncharacterized protein from Pseudomonas putida (Arthrobacter siderocapsulatus).